A 157-amino-acid chain; its full sequence is Transcription elongation factor GreA (157 aa).

A coiled-coil region spans residues 9–30; that stretch reads LEGAQQLKEELKRRKTTDRKRI.

This sequence belongs to the GreA/GreB family.

Functionally, necessary for efficient RNA polymerase transcription elongation past template-encoded arresting sites. The arresting sites in DNA have the property of trapping a certain fraction of elongating RNA polymerases that pass through, resulting in locked ternary complexes. Cleavage of the nascent transcript by cleavage factors such as GreA or GreB allows the resumption of elongation from the new 3'terminus. GreA releases sequences of 2 to 3 nucleotides. This is Transcription elongation factor GreA from Magnetococcus marinus (strain ATCC BAA-1437 / JCM 17883 / MC-1).